The primary structure comprises 462 residues: ATP synthase subunit beta (462 aa).

Gly-152–Thr-159 contacts ATP.

The protein belongs to the ATPase alpha/beta chains family. F-type ATPases have 2 components, CF(1) - the catalytic core - and CF(0) - the membrane proton channel. CF(1) has five subunits: alpha(3), beta(3), gamma(1), delta(1), epsilon(1). CF(0) has three main subunits: a(1), b(2) and c(9-12). The alpha and beta chains form an alternating ring which encloses part of the gamma chain. CF(1) is attached to CF(0) by a central stalk formed by the gamma and epsilon chains, while a peripheral stalk is formed by the delta and b chains.

Its subcellular location is the cell inner membrane. The enzyme catalyses ATP + H2O + 4 H(+)(in) = ADP + phosphate + 5 H(+)(out). Produces ATP from ADP in the presence of a proton gradient across the membrane. The catalytic sites are hosted primarily by the beta subunits. This is ATP synthase subunit beta from Aeromonas hydrophila subsp. hydrophila (strain ATCC 7966 / DSM 30187 / BCRC 13018 / CCUG 14551 / JCM 1027 / KCTC 2358 / NCIMB 9240 / NCTC 8049).